A 232-amino-acid chain; its full sequence is Ubiquinone biosynthesis O-methyltransferase (232 aa).

S-adenosyl-L-methionine contacts are provided by R36, G55, D76, and L120.

This sequence belongs to the methyltransferase superfamily. UbiG/COQ3 family.

It carries out the reaction a 3-demethylubiquinol + S-adenosyl-L-methionine = a ubiquinol + S-adenosyl-L-homocysteine + H(+). The catalysed reaction is a 3-(all-trans-polyprenyl)benzene-1,2-diol + S-adenosyl-L-methionine = a 2-methoxy-6-(all-trans-polyprenyl)phenol + S-adenosyl-L-homocysteine + H(+). Its pathway is cofactor biosynthesis; ubiquinone biosynthesis. Functionally, O-methyltransferase that catalyzes the 2 O-methylation steps in the ubiquinone biosynthetic pathway. This Pseudomonas putida (strain ATCC 700007 / DSM 6899 / JCM 31910 / BCRC 17059 / LMG 24140 / F1) protein is Ubiquinone biosynthesis O-methyltransferase.